A 194-amino-acid chain; its full sequence is Mitochondrial import inner membrane translocase subunit Tim22 (194 aa).

Disulfide bonds link Cys-69–Cys-141 and Cys-160–Cys-179. The next 3 membrane-spanning stretches (helical) occupy residues 74-94 (ALAC…TAGI), 123-143 (MSYA…ECLI), and 170-190 (AGLK…AAID).

The protein belongs to the Tim17/Tim22/Tim23 family. Component of the TIM22 complex, whose core is composed of TIMM22, associated with peripheral protein FXC1/TIMM10B and the 70 kDa heterohexamer. In most cases, the 70 kDa complex is composed of TIMM9 and TIMM10 (TIMM10A or TIMM10B). A small fraction of the 70 kDa complex is composed of TIMM8 (TIMM8A/DDP1 or TIMM8B/DDP2) and TIMM13. The TIM22 complex also contains AGK and TIMM29. Interacts directly with TIMM9, TIMM10A and FXC1/TIMM10B. Interacts (when oxidized) with TIMM29; interaction is direct. Disulfide bonds promote efficient assembly of the TIM22 complex.

It is found in the mitochondrion inner membrane. Its function is as follows. Essential core component of the TIM22 complex, a complex that mediates the import and insertion of multi-pass transmembrane proteins into the mitochondrial inner membrane. In the TIM22 complex, it constitutes the voltage-activated and signal-gated channel. Forms a twin-pore translocase that uses the membrane potential as external driving force in 2 voltage-dependent steps. This chain is Mitochondrial import inner membrane translocase subunit Tim22 (TIMM22), found in Homo sapiens (Human).